We begin with the raw amino-acid sequence, 325 residues long: Phenylalanine--tRNA ligase alpha subunit (325 aa).

Glutamate 251 lines the Mg(2+) pocket.

It belongs to the class-II aminoacyl-tRNA synthetase family. Phe-tRNA synthetase alpha subunit type 1 subfamily. In terms of assembly, tetramer of two alpha and two beta subunits. Mg(2+) serves as cofactor.

Its subcellular location is the cytoplasm. The enzyme catalyses tRNA(Phe) + L-phenylalanine + ATP = L-phenylalanyl-tRNA(Phe) + AMP + diphosphate + H(+). This Thermotoga petrophila (strain ATCC BAA-488 / DSM 13995 / JCM 10881 / RKU-1) protein is Phenylalanine--tRNA ligase alpha subunit.